Reading from the N-terminus, the 277-residue chain is Co-chaperone protein DjlA (277 aa).

At 1 to 6 the chain is on the periplasmic side; the sequence is MRYWGK. The chain crosses the membrane as a helical span at residues 7–31; it reads LLGLVLGVMYAPGVVGALLGLLVGH. The Cytoplasmic segment spans residues 32–277; it reads MVDRALGAKR…DLIKREKGFK (246 aa). The J domain occupies 211 to 277; that stretch reads DACKVLGVNS…DLIKREKGFK (67 aa).

Homodimer.

The protein localises to the cell inner membrane. Functionally, regulatory DnaK co-chaperone. Direct interaction between DnaK and DjlA is needed for the induction of the wcaABCDE operon, involved in the synthesis of a colanic acid polysaccharide capsule, possibly through activation of the RcsB/RcsC phosphotransfer signaling pathway. The colanic acid capsule may help the bacterium survive conditions outside the host. This is Co-chaperone protein DjlA from Yersinia pseudotuberculosis serotype I (strain IP32953).